Here is a 100-residue protein sequence, read N- to C-terminus: NADH-quinone oxidoreductase subunit K (100 aa).

The next 3 helical transmembrane spans lie at 4 to 24 (YEYY…GVIV), 28 to 48 (IIAM…AFVA), and 60 to 80 (VFVF…LGLI).

This sequence belongs to the complex I subunit 4L family. As to quaternary structure, NDH-1 is composed of 14 different subunits. Subunits NuoA, H, J, K, L, M, N constitute the membrane sector of the complex.

It is found in the cell inner membrane. It catalyses the reaction a quinone + NADH + 5 H(+)(in) = a quinol + NAD(+) + 4 H(+)(out). Functionally, NDH-1 shuttles electrons from NADH, via FMN and iron-sulfur (Fe-S) centers, to quinones in the respiratory chain. The immediate electron acceptor for the enzyme in this species is believed to be ubiquinone. Couples the redox reaction to proton translocation (for every two electrons transferred, four hydrogen ions are translocated across the cytoplasmic membrane), and thus conserves the redox energy in a proton gradient. This chain is NADH-quinone oxidoreductase subunit K, found in Sulfurihydrogenibium azorense (strain DSM 15241 / OCM 825 / Az-Fu1).